A 148-amino-acid polypeptide reads, in one-letter code: UPF0179 protein Ta1159 (148 aa).

It belongs to the UPF0179 family.

The chain is UPF0179 protein Ta1159 from Thermoplasma acidophilum (strain ATCC 25905 / DSM 1728 / JCM 9062 / NBRC 15155 / AMRC-C165).